We begin with the raw amino-acid sequence, 416 residues long: Phosphoglycerate kinase (416 aa).

Valine 23, aspartate 24, phenylalanine 25, asparagine 26, glutamine 38, arginine 39, serine 62, histidine 63, glycine 65, arginine 66, leucine 121, arginine 122, histidine 168, and arginine 169 together coordinate (2R)-3-phosphoglycerate. Glycine 212 is an ADP binding site. Glycine 212 lines the CDP pocket. AMP-binding residues include alanine 213 and lysine 214. Alanine 213 provides a ligand contact to ATP. Mg(2+) is bound at residue alanine 213. Aspartate 217 is a CDP binding site. Residue aspartate 217 participates in Mg(2+) binding. Lysine 218 lines the AMP pocket. Lysine 218 lines the ATP pocket. ADP is bound at residue glycine 236. Glycine 236 provides a ligand contact to CDP. The AMP site is built by glycine 237 and glycine 311. ATP contacts are provided by glycine 237 and glycine 311. Positions 336 and 341 each coordinate CDP. ADP is bound at residue phenylalanine 341. AMP is bound at residue glutamate 342. 3 residues coordinate ATP: glutamate 342, aspartate 373, and threonine 374. A Mg(2+)-binding site is contributed by aspartate 373.

It belongs to the phosphoglycerate kinase family. As to quaternary structure, monomer. Mg(2+) is required as a cofactor.

The protein resides in the cytoplasm. The protein localises to the mitochondrion. It carries out the reaction (2R)-3-phosphoglycerate + ATP = (2R)-3-phospho-glyceroyl phosphate + ADP. Its pathway is carbohydrate degradation; glycolysis; pyruvate from D-glyceraldehyde 3-phosphate: step 2/5. Catalyzes one of the two ATP producing reactions in the glycolytic pathway via the reversible conversion of 1,3-diphosphoglycerate to 3-phosphoglycerate. Both L- and D- forms of purine and pyrimidine nucleotides can be used as substrates, but the activity is much lower on pyrimidines. Negatively regulates the biosynthesis of acetyl-CoA from pyruvate in the mitochondrion. This chain is Phosphoglycerate kinase (PGK1), found in Debaryomyces hansenii (strain ATCC 36239 / CBS 767 / BCRC 21394 / JCM 1990 / NBRC 0083 / IGC 2968) (Yeast).